The following is a 227-amino-acid chain: Charged multivesicular body protein 4c (227 aa).

A disordered region spans residues 1 to 27; sequence MSKITKLFKSSGGSGSSSKNRKGPSAQ. Coiled-coil stretches lie at residues 32-94 and 129-187; these read KLRE…STIE and LEKI…MANV. Residues 178–227 form a disordered region; sequence EDLNSQMANVNLPSVPSSKLPSTKLPSRPASSRKKVEDDDDMQMLAAWAT. A compositionally biased stretch (low complexity) spans 189–206; that stretch reads LPSVPSSKLPSTKLPSRP.

Belongs to the SNF7 family. As to quaternary structure, probable core component of the endosomal sorting required for transport complex III (ESCRT-III). ESCRT-III components are thought to multimerize to form a flat lattice on the perimeter membrane of the endosome.

It localises to the cytoplasm. The protein localises to the cytosol. The protein resides in the late endosome membrane. Probable core component of the endosomal sorting required for transport complex III (ESCRT-III) which is involved in multivesicular bodies (MVBs) formation and sorting of endosomal cargo proteins into MVBs. MVBs contain intraluminal vesicles (ILVs) that are generated by invagination and scission from the limiting membrane of the endosome and mostly are delivered to lysosomes enabling degradation of membrane proteins, such as stimulated growth factor receptors, lysosomal enzymes and lipids. Key component of the cytokinesis checkpoint, a process required to delay abscission to prevent both premature resolution of intercellular chromosome bridges and accumulation of DNA damage. The chain is Charged multivesicular body protein 4c (chmp4c) from Xenopus laevis (African clawed frog).